A 146-amino-acid chain; its full sequence is MNLSELRPAPGARKKPTRKGQGIGSGLGKTAGKGHKGQNARSGGGVRPGFEGGQMPLQRRFPKRGFTNIFKKQITAINLDELNVFEAGTEVTPELLLEAGLIKKVGDGVKILGDGILEKALTVKVHAFSKSAVEKITAAGGKAEVI.

Residues Met1–Gln58 are disordered. Composition is skewed to gly residues over residues Gln21 to Ala31 and Ser42 to Gly52.

This sequence belongs to the universal ribosomal protein uL15 family. As to quaternary structure, part of the 50S ribosomal subunit.

Binds to the 23S rRNA. The protein is Large ribosomal subunit protein uL15 of Desulforamulus reducens (strain ATCC BAA-1160 / DSM 100696 / MI-1) (Desulfotomaculum reducens).